A 104-amino-acid polypeptide reads, in one-letter code: Large ribosomal subunit protein uL24 (104 aa).

It belongs to the universal ribosomal protein uL24 family. As to quaternary structure, part of the 50S ribosomal subunit.

One of two assembly initiator proteins, it binds directly to the 5'-end of the 23S rRNA, where it nucleates assembly of the 50S subunit. Functionally, one of the proteins that surrounds the polypeptide exit tunnel on the outside of the subunit. This chain is Large ribosomal subunit protein uL24, found in Shigella flexneri.